We begin with the raw amino-acid sequence, 474 residues long: Synaptotagmin-17 (474 aa).

Residues 60 to 112 (WLMASRSSDKDGDSVHTASEVPLTPRTNSPDGRRSSSDTSKSTYSLTRRISSL) form a disordered region. Over residues 96 to 112 (SDTSKSTYSLTRRISSL) the composition is skewed to low complexity. Ser-118 and Ser-119 each carry phosphoserine. C2 domains lie at 184 to 310 (QLGM…HWWK) and 321 to 455 (ELGE…EQWH).

Belongs to the synaptotagmin family.

Its subcellular location is the membrane. In terms of biological role, plays a role in dendrite formation by melanocytes. The polypeptide is Synaptotagmin-17 (SYT17) (Pongo abelii (Sumatran orangutan)).